The sequence spans 471 residues: UDP-glycosyltransferase 71A15 (471 aa).

UDP-alpha-D-glucose contacts are provided by residues S282, 348 to 349 (WA), 366 to 374 (HCGWNSTLE), and 388 to 391 (YAEQ).

Belongs to the UDP-glycosyltransferase family.

Its function is as follows. Glycosyltransferase that possesses chalcone and flavonol 2'-O-glycosyltransferase activity. Converts phloretin to phlorizin (phloretin 2'-O-glucoside), a potent antioxidant. Possesses glycosyltransferase activity toward, naringenin, naringenin chalcone, eriodictyol, eriodictyol chalcone, apigenin, luteolin, kaempferol, quercetin, isoliquiritigenin, butein and caffeic acid. Can convert phloretin to phloretin 4'-O-glucoside and phloretin 4-O-glucoside. The protein is UDP-glycosyltransferase 71A15 of Malus domestica (Apple).